Reading from the N-terminus, the 234-residue chain is Orotidine 5'-phosphate decarboxylase (234 aa).

Substrate is bound by residues D14, K36, 63–72 (DLKFHDIPNT), T123, R184, Q193, G213, and R214. K65 (proton donor) is an active-site residue.

It belongs to the OMP decarboxylase family. Type 1 subfamily. Homodimer.

It carries out the reaction orotidine 5'-phosphate + H(+) = UMP + CO2. It participates in pyrimidine metabolism; UMP biosynthesis via de novo pathway; UMP from orotate: step 2/2. In terms of biological role, catalyzes the decarboxylation of orotidine 5'-monophosphate (OMP) to uridine 5'-monophosphate (UMP). This Psychromonas ingrahamii (strain DSM 17664 / CCUG 51855 / 37) protein is Orotidine 5'-phosphate decarboxylase.